The chain runs to 357 residues: Alanine racemase (357 aa).

The active-site Proton acceptor; specific for D-alanine is K35. Position 35 is an N6-(pyridoxal phosphate)lysine (K35). R131 is a substrate binding site. Y256 (proton acceptor; specific for L-alanine) is an active-site residue. Substrate is bound at residue M304.

The protein belongs to the alanine racemase family. It depends on pyridoxal 5'-phosphate as a cofactor.

It catalyses the reaction L-alanine = D-alanine. It participates in amino-acid biosynthesis; D-alanine biosynthesis; D-alanine from L-alanine: step 1/1. Functionally, catalyzes the interconversion of L-alanine and D-alanine. May also act on other amino acids. The protein is Alanine racemase (alr) of Legionella pneumophila (strain Corby).